The sequence spans 87 residues: Cell division topological specificity factor (87 aa).

Belongs to the MinE family.

Functionally, prevents the cell division inhibition by proteins MinC and MinD at internal division sites while permitting inhibition at polar sites. This ensures cell division at the proper site by restricting the formation of a division septum at the midpoint of the long axis of the cell. The protein is Cell division topological specificity factor of Rhizobium meliloti (strain 1021) (Ensifer meliloti).